A 348-amino-acid polypeptide reads, in one-letter code: Holliday junction branch migration complex subunit RuvB (348 aa).

The segment at 4–186 (TDRIISANTA…FGIIQRLEFY (183 aa)) is large ATPase domain (RuvB-L). Residues Ile25, Arg26, Gly67, Lys70, Thr71, Thr72, 133–135 (EDY), Arg176, Tyr186, and Arg223 each bind ATP. Thr71 provides a ligand contact to Mg(2+). The segment at 187-257 (SIDDLSKIVY…IADKALSMLK (71 aa)) is small ATPAse domain (RuvB-S). Residues 260–348 (PVGFDHMDHR…SADQQQTLSI (89 aa)) are head domain (RuvB-H). Arg315 and Arg320 together coordinate DNA.

This sequence belongs to the RuvB family. In terms of assembly, homohexamer. Forms an RuvA(8)-RuvB(12)-Holliday junction (HJ) complex. HJ DNA is sandwiched between 2 RuvA tetramers; dsDNA enters through RuvA and exits via RuvB. An RuvB hexamer assembles on each DNA strand where it exits the tetramer. Each RuvB hexamer is contacted by two RuvA subunits (via domain III) on 2 adjacent RuvB subunits; this complex drives branch migration. In the full resolvosome a probable DNA-RuvA(4)-RuvB(12)-RuvC(2) complex forms which resolves the HJ.

Its subcellular location is the cytoplasm. It catalyses the reaction ATP + H2O = ADP + phosphate + H(+). Its function is as follows. The RuvA-RuvB-RuvC complex processes Holliday junction (HJ) DNA during genetic recombination and DNA repair, while the RuvA-RuvB complex plays an important role in the rescue of blocked DNA replication forks via replication fork reversal (RFR). RuvA specifically binds to HJ cruciform DNA, conferring on it an open structure. The RuvB hexamer acts as an ATP-dependent pump, pulling dsDNA into and through the RuvAB complex. RuvB forms 2 homohexamers on either side of HJ DNA bound by 1 or 2 RuvA tetramers; 4 subunits per hexamer contact DNA at a time. Coordinated motions by a converter formed by DNA-disengaged RuvB subunits stimulates ATP hydrolysis and nucleotide exchange. Immobilization of the converter enables RuvB to convert the ATP-contained energy into a lever motion, pulling 2 nucleotides of DNA out of the RuvA tetramer per ATP hydrolyzed, thus driving DNA branch migration. The RuvB motors rotate together with the DNA substrate, which together with the progressing nucleotide cycle form the mechanistic basis for DNA recombination by continuous HJ branch migration. Branch migration allows RuvC to scan DNA until it finds its consensus sequence, where it cleaves and resolves cruciform DNA. In Francisella tularensis subsp. tularensis (strain FSC 198), this protein is Holliday junction branch migration complex subunit RuvB.